The chain runs to 944 residues: Protocadherin gamma-C5 (944 aa).

The N-terminal stretch at 1–29 (MGPKTLPQLAGKWQVLCMLSLCCWGWVSG) is a signal peptide. Cadherin domains lie at 30-133 (QLRY…SPSF), 134-242 (ATPE…APTF), 243-350 (QSSV…APEV), 351-454 (LLAS…APRF), 455-564 (NQQL…APAV), and 571-677 (WEHS…MPKS). Residues 30–693 (QLRYSVVEES…PPERSDLTLY (664 aa)) lie on the Extracellular side of the membrane. 3 N-linked (GlcNAc...) asparagine glycosylation sites follow: N265, N443, and N547. The chain crosses the membrane as a helical span at residues 694–714 (LIVALATVSLLSLVTFTFLSA). At 715–944 (KCLQGNADGD…KKKSGKKEKK (230 aa)) the chain is on the cytoplasmic side. Disordered stretches follow at residues 722 to 747 (DGDG…QSSP), 812 to 853 (SNTL…WPNN), and 914 to 944 (ATLT…KEKK). Over residues 820–853 (QQAPPNTDWRFSQAQRPGTSGSQNGDDTGTWPNN) the composition is skewed to polar residues. Residues 934–944 (NKKKSGKKEKK) show a composition bias toward basic residues.

The protein resides in the cell membrane. In terms of biological role, potential calcium-dependent cell-adhesion protein. May be involved in the establishment and maintenance of specific neuronal connections in the brain. The chain is Protocadherin gamma-C5 (PCDHGC5) from Pan troglodytes (Chimpanzee).